The following is a 271-amino-acid chain: Aspartate/glutamate leucyltransferase (271 aa).

The protein belongs to the R-transferase family. Bpt subfamily.

The protein localises to the cytoplasm. The catalysed reaction is N-terminal L-glutamyl-[protein] + L-leucyl-tRNA(Leu) = N-terminal L-leucyl-L-glutamyl-[protein] + tRNA(Leu) + H(+). The enzyme catalyses N-terminal L-aspartyl-[protein] + L-leucyl-tRNA(Leu) = N-terminal L-leucyl-L-aspartyl-[protein] + tRNA(Leu) + H(+). In terms of biological role, functions in the N-end rule pathway of protein degradation where it conjugates Leu from its aminoacyl-tRNA to the N-termini of proteins containing an N-terminal aspartate or glutamate. The polypeptide is Aspartate/glutamate leucyltransferase (Acinetobacter baylyi (strain ATCC 33305 / BD413 / ADP1)).